The chain runs to 713 residues: Histone-lysine N-methyltransferase SETDB2 (713 aa).

Residues 78 to 109 (PEVNTHRSNHTPVTQSEQENKSSAVPSASCDN) are disordered. The span at 87–109 (HTPVTQSEQENKSSAVPSASCDN) shows a compositional bias: polar residues. Positions 161–233 (LSLKGENPLQ…DNFSFNTYVQ (73 aa)) constitute an MBD domain. The 74-residue stretch at 294 to 367 (DSCDCSEGCI…MCQNRVIQHG (74 aa)) folds into the Pre-SET domain. Zn(2+) is bound by residues Cys-296, Cys-298, Cys-302, Cys-308, Cys-310, Cys-348, Cys-352, Cys-354, and Cys-359. The region spanning 370–688 (VRLQVFKSEK…ARTELTWDYG (319 aa)) is the SET domain. 380 to 382 (KGW) lines the S-adenosyl-L-methionine pocket. 2 stretches are compositionally biased toward basic and acidic residues: residues 511-534 (EDKN…HEDL) and 579-592 (TKQV…KSQE). Disordered stretches follow at residues 511–549 (EDKN…QLTE) and 579–608 (TKQV…CDEE). S-adenosyl-L-methionine contacts are provided by residues Arg-642 and 645–646 (NH). Residues Cys-648, Cys-701, Cys-703, and Cys-708 each coordinate Zn(2+).

Belongs to the class V-like SAM-binding methyltransferase superfamily.

It localises to the nucleus. It is found in the chromosome. It carries out the reaction N(6),N(6)-dimethyl-L-lysyl(9)-[histone H3] + S-adenosyl-L-methionine = N(6),N(6),N(6)-trimethyl-L-lysyl(9)-[histone H3] + S-adenosyl-L-homocysteine + H(+). In terms of biological role, histone methyltransferase involved in left-right axis specification in early development and mitosis. Specifically trimethylates 'Lys-9' of histone H3 (H3K9me3). H3K9me3 is a specific tag for epigenetic transcriptional repression that recruits HP1 (CBX1, CBX3 and/or CBX5) proteins to methylated histones. Contributes to H3K9me3 in both the interspersed repetitive elements and centromere-associated repeats. Plays a role in chromosome condensation and segregation during mitosis. This Mus musculus (Mouse) protein is Histone-lysine N-methyltransferase SETDB2 (Setdb2).